The sequence spans 331 residues: Putative ankyrin repeat protein FPV012 (331 aa).

ANK repeat units follow at residues 11–40 (DGYT…NPNT), 44–73 (DSYT…NVDK), 77–106 (DGYT…NPNY), and 110–139 (YGIT…NCNQ).

The sequence is that of Putative ankyrin repeat protein FPV012 from Vertebrata (FPV).